The chain runs to 595 residues: Myb-like protein D (595 aa).

Disordered regions lie at residues 1 to 47 (MQQQ…NGLV), 55 to 74 (QQYQDDQNDSFDDDSMDEGE), 82 to 266 (DESQ…NNRK), and 319 to 445 (VLQK…IWTQ). A compositionally biased stretch (low complexity) spans 19-47 (DNYNNNNSNINTNNNNSINDYENQNNGLV). Over residues 60–74 (DQNDSFDDDSMDEGE) the composition is skewed to acidic residues. Composition is skewed to low complexity over residues 90 to 212 (NNNN…ENNN) and 225 to 264 (NNNNNNNNNNNNNNNNNNNNNNNNKNNNNNNNNNNNNNNN). Positions 324 to 348 (TLNRNRSRSRSRSNSRSHSRSRSRS) are enriched in basic residues. Composition is skewed to low complexity over residues 349–368 (RSLSSISRSRSRSRLIYSRS) and 376–420 (NNNN…NNNN). Residues 423-434 (RKSEDDNQDDGK) show a composition bias toward basic and acidic residues. Residues 435 to 489 (KKHRKNAIWTQEEDEKMAQLYNKYGKSWKAIHSHFDDKTREQVQSHGQYLIRIGK) enclose the HTH myb-type domain. The segment at residues 462 to 485 (WKAIHSHFDDKTREQVQSHGQYLI) is a DNA-binding region (H-T-H motif). Positions 494–595 (HRDGRKERRK…NSSNYVNNDN (102 aa)) are disordered. Residues 517 to 595 (QQNQQNNNNN…NSSNYVNNDN (79 aa)) show a composition bias toward low complexity.

The protein resides in the nucleus. The chain is Myb-like protein D (mybD) from Dictyostelium discoideum (Social amoeba).